Here is a 256-residue protein sequence, read N- to C-terminus: Type III pantothenate kinase (256 aa).

7-14 (DIGNTNVV) lines the ATP pocket. Residue 108-111 (GADC) participates in substrate binding. The Proton acceptor role is filled by Asp110. Residue Asp130 coordinates K(+). Residue Thr133 participates in ATP binding. Thr185 lines the substrate pocket.

It belongs to the type III pantothenate kinase family. As to quaternary structure, homodimer. NH4(+) is required as a cofactor. It depends on K(+) as a cofactor.

It is found in the cytoplasm. The enzyme catalyses (R)-pantothenate + ATP = (R)-4'-phosphopantothenate + ADP + H(+). The protein operates within cofactor biosynthesis; coenzyme A biosynthesis; CoA from (R)-pantothenate: step 1/5. Catalyzes the phosphorylation of pantothenate (Pan), the first step in CoA biosynthesis. The protein is Type III pantothenate kinase of Bifidobacterium adolescentis (strain ATCC 15703 / DSM 20083 / NCTC 11814 / E194a).